Reading from the N-terminus, the 601-residue chain is Glutathione-regulated potassium-efflux system protein KefB (601 aa).

13 consecutive transmembrane segments (helical) span residues 5–25 (DLLLAGILFLFAAVVAVPIAA), 29–49 (IGAVLGYLLAGIAIGPWGLGF), 55–75 (EILHFSELGVVFLMFLIGLEL), 87–107 (IFGIGAAQVLLSAVVLAGLLM), 115–135 (AAVVGGIGLAMSSTAMALQLM), 152–172 (VLLFQDLAVIPALAMVPLLAG), 181–201 (LKIGMKVLAFAVMLVGGRYLL), 207–227 (FIAGSGVREVFTAAALLLVLG), 230–250 (LFMDLLGLSMALGTFIAGILL), 268–288 (GLLLGLFFISVGMALNLGVLY), 291–311 (ILWVVMSVVVLVSVKMAVLYG), 324–344 (LPFAGVLSQGGEFAFVLFSSA), and 356–376 (ALLLVTVTLSMMTTPLVMKGI). The region spanning 400-519 (KPQVIIVGFG…AGVKQFSRET (120 aa)) is the RCK N-terminal domain.

The protein belongs to the monovalent cation:proton antiporter 2 (CPA2) transporter (TC 2.A.37) family. KefB subfamily. As to quaternary structure, interacts with the regulatory subunit KefG.

The protein resides in the cell inner membrane. Functionally, pore-forming subunit of a potassium efflux system that confers protection against electrophiles. Catalyzes K(+)/H(+) antiport. The chain is Glutathione-regulated potassium-efflux system protein KefB from Cronobacter sakazakii (strain ATCC BAA-894) (Enterobacter sakazakii).